Reading from the N-terminus, the 3083-residue chain is MRGSGTGAALLVLLASVLWVTVRSQQRGLFPAILNLATNAHISANATCGEKGPEMFCKLVEHVPGRPVRHAQCRVCDGNSTNPRERHPISHAIDGTNNWWQSPSIQNGREYHWVTVTLDLRQVFQVAYIIIKAANAPRPGNWILERSVDGVKFKPWQYYAVSDTECLTRYKITPRRGPPTYRADNEVICTSYYSKLVPLEHGEIHTSLINGRPSADDPSPQLLEFTSARYIRLRLQRIRTLNADLMTLSHRDLRDLDPIVTRRYYYSIKDISVGGMCICYGHASSCPWDEEAKQLQCQCEHNTCGESCDRCCPGYHQQPWRPGTISSGNECEECNCHNKAKDCYYDSSVAKERRSLNTAGQYSGGGVCVNCSQNTTGINCETCIDQYYRPHKVSPYDDHPCRPCNCDPVGSLSSVCIKDDRHADLANGKWPGQCPCRKGYAGDKCDRCQFGYRGFPNCIPCDCRTVGSLNEDPCIEPCLCKKNVEGKNCDRCKPGFYNLKERNPEGCSECFCFGVSGVCDSLTWSISQVTNMSGWLVTDLMSTNKIRSQQDVLGGHRQISINNTAVMQRLTSTYYWAAPEAYLGNKLTAFGGFLKYTVSYDIPVETVDSDLMSHADIIIKGNGLTISTRAEGLSLQPYEEYFNVVRLVPENFRDFDTRREIDRDQLMTVLANVTHLLIRANYNSAKMALYRLDSVSLDIASPNAIDLAVAADVEHCECPQGYTGTSCEACLPGYYRVDGILFGGICQPCECHGHASECDIHGICSVCTHNTTGDHCEQCLPGFYGTPSRGTPGDCQPCACPLSIDSNNFSPTCHLTDGEEVVCDQCAPGYSGSWCERCADGYYGNPTVPGGTCVPCNCSGNVDPLEAGHCDSVTGECLKCLWNTDGAHCERCADGFYGDAVTAKNCRACDCHENGSLSGICHLETGLCDCKPHVTGQQCDQCLSGYYGLDTGLGCVPCNCSVEGSVSDNCTEEGQCHCGPGVSGKQCDRCSHGFYAFQDGGCTPCDCAHTQNNCDPASGECLCPPHTQGLKCEECEEAYWGLDPEQGCQACNCSAVGSTSAQCDVLSGHCPCKKGFGGQSCHQCSLGYRSFPDCVPCGCDLRGTLPDTCDLEQGLCSCSEDGGTCSCKENAVGPQCSKCQAGTFALRGDNPQGCSPCFCFGLSQLCSELEGYVRTLITLASDQPLLHVVSQSNLKGTIEGVHFQPPDTLLDAEAVRQHIYAEPFYWRLPKQFQGDQLLAYGGKLQYSVAFYSTLGTGTSNYEPQVLIKGGRARKHVIYMDAPAPENGVRQDYEVRMKEEFWKYFNSVSEKHVTHSDFMSVLSNIDYILIKASYGQGLQQSRIANISMEVGRKAVELPAEGEAALLLELCVCPPGTAGHSCQDCAPGYYREKLPESGGRGPRPLLAPCVPCNCNNHSDVCDPETGKCLSCRDHTSGDHCELCASGYYGKVTGLPGDCTPCTCPHHPPFSFSPTCVVEGDSDFRCNACLPGYEGQYCERCSAGYHGNPRAAGGSCQTCDCNPQGSVHSDCDRASGQCVCKPGATGLHCEKCLPRHILMESDCVSCDDDCVGPLLNDLDSVGDAVLSLNLTGVSPAPYGILENLENTTKYFQRYLIKENAKKIRAEIQLEGIAEQTENLQKELTRVLARHQKVNAEMERTSNGTQALATFIEQLHANIKEITEKVATLNQTARKDFQPPVSALQSMHQNISSLLGLIKERNFTEMQQNATLELKAAKDLLSRIQKRFQKPQEKLKALKEANSLLSNHSEKLQAAEELLKEAGSKTQESNLLLLLVKANLKEFQEKKLRVQEEQNVTSELIAKGREWVDAAGTHTAAAQDTLTQLEHHRDELLLWARKIRSHVDDLVMQMSKRRARDLVHRAEQHASELQSRAGALDRDLENVRNVSLNATSAAHVHSNIQTLTEEAEMLAADAHKTANKTDLISESLASRGKAVLQRSSRFLKESVSTRRKQQGITMKLDELKNLTSQFQESMDNIMKQANDSLAMLRESPGGMREKGRKARELAAAANESAVKTLEDVLALSLRVFNTSEDLSRVNATVQETNDLLHNSTMTTLLAGRKMKDMEMQANLLLDRLKPLKTLEENLSRNLSEIKLLISRARKQVASIKVAVSADRDCIRAYQPQTSSTNYNTLILNVKTQEPDNLLFYLGSSSSSDFLAVEMRRGKVAFLWDLGSGSTRLEFPEVSINNNRWHSIYITRFGNMGSLSVKEASAAENPPVRTSKSPGPSKVLDINNSTLMFVGGLGGQIKKSPAVKVTHFKGCMGEAFLNGKSIGLWNYIEREGKCNGCFGSSQNEDSSFHFDGSGYAMVEKTLRPTVTQIVILFSTFSPNGLLFYLASNGTKDFLSIELVRGRVKVMVDLGSGPLTLMTDRRYNNGTWYKIAFQRNRKQGLLAVFDAYDTSDKETKQGETPGAASDLNRLEKDLIYVGGLPHSKAVRKGVSSRSYVGCIKNLEISRSTFDLLRNSYGVRKGCALEPIQSVSFLRGGYVEMPPKSLSPESSLLATFATKNSSGILLVALGKDAEEAGGAQAHVPFFSIMLLEGRIEVHVNSGDGTSLRKALLHAPTGSYSDGQEHSISLVRNRRVITIQVDENSPVEMKLGPLTEGKTIDISNLYIGGLPEDKATPMLKMRTSFHGCIKNVVLDAQLLDFTHATGSEQVELDTCLLAEEPMQSLHREHGELPPEPPTLPQPELCAVDTAPGYVAGAHQFGLSQNSHLVLPLNQSDVRKRLQVQLSIRTFASSGLIYYVAHQNQMDYATLQLQEGRLHFMFDLGKGRTKVSHPALLSDGKWHTVKTEYIKRKAFMTVDGQESPSVTVVGNATTLDVERKLYLGGLPSHYRARNIGTITHSIPACIGEIMVNGQQLDKDRPLSASAVDRCYVVAQEGTFFEGSGYAALVKEGYKVRLDLNITLEFRTTSKNGVLLGISSAKVDAIGLEIVDGKVLFHVNNGAGRITATYQPRAARALCDGKWHTLQAHKSKHRIVLTVDGNSVRAESPHTHSTSADTNDPIYVGGYPAHIKQNCLSSRASFRGCVRNLRLSRGSQVQSLDLSRAFDLQGVFPHSCPGPEP.

An N-terminal signal peptide occupies residues 1 to 24 (MRGSGTGAALLVLLASVLWVTVRS). A Pyrrolidone carboxylic acid modification is found at Gln-25. A Laminin N-terminal domain is found at 25–276 (QQRGLFPAIL…SIKDISVGGM (252 aa)). Intrachain disulfides connect Cys-277–Cys-286, Cys-279–Cys-297, Cys-299–Cys-308, Cys-311–Cys-331, Cys-334–Cys-343, and Cys-336–Cys-368. Laminin EGF-like domains follow at residues 277–333 (CICY…ECEE), 334–403 (CNCH…PCRP), 404–460 (CNCD…NCIP), and 461–509 (CDCR…GCSE). Asn-370 carries N-linked (GlcNAc...) asparagine glycosylation. 10 cysteine pairs are disulfide-bonded: Cys-371–Cys-380, Cys-383–Cys-401, Cys-404–Cys-416, Cys-406–Cys-434, Cys-436–Cys-445, Cys-448–Cys-458, Cys-461–Cys-474, Cys-463–Cys-478, Cys-480–Cys-489, and Cys-492–Cys-507. Positions 510–519 (CFCFGVSGVC) constitute a Laminin EGF-like 5; first part domain. The region spanning 523 to 715 (TWSISQVTNM…DLAVAADVEH (193 aa)) is the Laminin IV type A 1 domain. Asn-672 is a glycosylation site (N-linked (GlcNAc...) asparagine). The region spanning 716 to 748 (CECPQGYTGTSCEACLPGYYRVDGILFGGICQP) is the Laminin EGF-like 5; second part domain. Cystine bridges form between Cys-749–Cys-758, Cys-751–Cys-764, Cys-767–Cys-776, Cys-779–Cys-795, Cys-798–Cys-813, Cys-800–Cys-823, Cys-826–Cys-835, Cys-838–Cys-853, Cys-856–Cys-870, Cys-858–Cys-877, Cys-880–Cys-889, Cys-892–Cys-906, Cys-909–Cys-921, Cys-911–Cys-928, Cys-930–Cys-939, Cys-942–Cys-955, Cys-958–Cys-970, Cys-960–Cys-976, Cys-978–Cys-987, Cys-990–Cys-1002, Cys-1005–Cys-1014, Cys-1007–Cys-1021, Cys-1023–Cys-1032, Cys-1035–Cys-1048, Cys-1051–Cys-1063, Cys-1053–Cys-1070, Cys-1072–Cys-1081, Cys-1084–Cys-1094, Cys-1097–Cys-1109, Cys-1099–Cys-1125, Cys-1127–Cys-1136, and Cys-1139–Cys-1154. Laminin EGF-like domains lie at 749–797 (CECH…DCQP), 798–855 (CACP…TCVP), 856–908 (CNCS…NCRA), 909–957 (CDCH…GCVP), 958–1004 (CNCS…GCTP), 1005–1050 (CDCA…GCQA), 1051–1096 (CNCS…DCVP), and 1097–1156 (CGCD…GCSP). The Cell attachment site signature appears at 1147-1149 (RGD). One can recognise a Laminin EGF-like 14; first part domain in the interval 1157–1166 (CFCFGLSQLC). One can recognise a Laminin IV type A 2 domain in the interval 1177–1368 (ITLASDQPLL…EGEAALLLEL (192 aa)). Asn-1344 is a glycosylation site (N-linked (GlcNAc...) asparagine). The 41-residue stretch at 1369–1409 (CVCPPGTAGHSCQDCAPGYYREKLPESGGRGPRPLLAPCVP) folds into the Laminin EGF-like 14; second part domain. Intrachain disulfides connect Cys-1410-Cys-1419, Cys-1412-Cys-1426, Cys-1429-Cys-1438, Cys-1441-Cys-1456, Cys-1459-Cys-1473, Cys-1461-Cys-1483, Cys-1486-Cys-1495, Cys-1498-Cys-1513, Cys-1516-Cys-1528, Cys-1518-Cys-1535, Cys-1537-Cys-1546, and Cys-1549-Cys-1560. 3 Laminin EGF-like domains span residues 1410–1458 (CNCN…DCTP), 1459–1515 (CTCP…SCQT), and 1516–1562 (CDCN…DCVS). A domain II and I region spans residues 1564-2123 (DDDCVGPLLN…SRARKQVASI (560 aa)). Residues 1617-1691 (AKKIRAEIQL…VATLNQTARK (75 aa)) are a coiled coil. N-linked (GlcNAc...) asparagine glycosylation is found at Asn-1659, Asn-1686, Asn-1718, Asn-1725, Asn-1763, and Asn-1811. Residues 1723-1809 (QQNATLELKA…QEKKLRVQEE (87 aa)) are a coiled coil. Residues 1868 to 1901 (KRRARDLVHRAEQHASELQSRAGALDRDLENVRN) are a coiled coil. N-linked (GlcNAc...) asparagine glycans are attached at residues Asn-1935, Asn-2026, Asn-2045, and Asn-2066. Laminin G-like domains are found at residues 2124-2304 (KVAV…CNGC), 2312-2488 (DSSF…RKGC), 2493-2679 (IQSV…LDTC), 2721-2893 (AHQF…VDRC), and 2898-3078 (QEGT…PHSC). A disulfide bond links Cys-2278 and Cys-2304. The N-linked (GlcNAc...) asparagine glycan is linked to Asn-2355. 2 disulfide bridges follow: Cys-2464-Cys-2488 and Cys-2652-Cys-2679. Asn-2834 is a glycosylation site (N-linked (GlcNAc...) asparagine). Cysteines 2868 and 2893 form a disulfide. Asn-2923 is a glycosylation site (N-linked (GlcNAc...) asparagine). A disulfide bridge connects residues Cys-3047 and Cys-3078.

In terms of assembly, laminin is a complex glycoprotein, consisting of three different polypeptide chains (alpha, beta, gamma), which are bound to each other by disulfide bonds into a cross-shaped molecule comprising one long and three short arms with globules at each end. Alpha-1 is a subunit of laminin-1 (laminin-111 or EHS laminin) and laminin-3 (laminin-121 or S-laminin). Tyrosine phosphorylated by PKDCC/VLK.

It localises to the secreted. It is found in the extracellular space. The protein resides in the extracellular matrix. Its subcellular location is the basement membrane. Functionally, binding to cells via a high affinity receptor, laminin is thought to mediate the attachment, migration and organization of cells into tissues during embryonic development by interacting with other extracellular matrix components. This Mus musculus (Mouse) protein is Laminin subunit alpha-1 (Lama1).